Here is a 135-residue protein sequence, read N- to C-terminus: Large ribosomal subunit protein uL16 (135 aa).

This sequence belongs to the universal ribosomal protein uL16 family. Part of the 50S ribosomal subunit.

Its function is as follows. Binds 23S rRNA and is also seen to make contacts with the A and possibly P site tRNAs. The polypeptide is Large ribosomal subunit protein uL16 (Coprothermobacter proteolyticus (strain ATCC 35245 / DSM 5265 / OCM 4 / BT)).